The chain runs to 986 residues: Ephrin type-B receptor 2 (986 aa).

A signal peptide spans 1–18 (MAVRRLGAALLLLPLLAA). Topologically, residues 19 to 543 (VEETLMDSTT…QTSIKEKLPL (525 aa)) are extracellular. Residues 20-202 (EETLMDSTTA…FYRKCPRIIQ (183 aa)) form the Eph LBD domain. 2 disulfides stabilise this stretch: Cys-62-Cys-184 and Cys-97-Cys-107. Residues Asn-265, Asn-336, Asn-428, and Asn-482 are each glycosylated (N-linked (GlcNAc...) asparagine). Fibronectin type-III domains are found at residues 324–434 (IPSA…TNQA) and 435–530 (APSA…TMTE). Residues 544–564 (IVGSSAAGLVFLIAVVVIAIV) form a helical membrane-spanning segment. Residues 565 to 986 (CNRRGFERAD…QMNQIQSVEV (422 aa)) lie on the Cytoplasmic side of the membrane. The Protein kinase domain occupies 621–884 (VKIEQVIGAG…QIVNTLDKMI (264 aa)). ATP is bound by residues 627–635 (IGAGEFGEV) and Lys-653. The Proton acceptor role is filled by Asp-746. A Glycyl lysine isopeptide (Lys-Gly) (interchain with G-Cter in ubiquitin) cross-link involves residue Lys-891. The SAM domain occupies 913–977 (TSFNTVDEWL…LNSIQVMRAQ (65 aa)). Positions 984–986 (VEV) match the PDZ-binding motif.

This sequence belongs to the protein kinase superfamily. Tyr protein kinase family. Ephrin receptor subfamily. Heterotetramer upon binding of the ligand. The heterotetramer is composed of an ephrin dimer and a receptor dimer. Interacts (via PDZ-binding motif) with GRIP1 and PICK1 (via PDZ domain). Interacts with ARHGEF15; mediates ARHGEF15 phosphorylation, ubiquitination and degradation by the proteasome. Interacts with AQP1; involved in endolymph production in the inner ear. Interacts with EFNA5. Interacts with SPSB1. Interacts with SPSB4. Interacts with SH2D3C. In terms of processing, autophosphorylated; ligand binding stimulates autophosphorylation on tyrosine residues. Post-translationally, ligand binding induces cleavage by matrix metalloproteinases (MMPs) such as MMP7/MMP9, producing an EphB2/N-terminal fragment (NTF) and a C-terminal long fragment (EphB2-LF). EphB2-LF is further cleaved by MMPs, producing EphB2/CTF1 which is further cleaved by the PS1/gamma-secretase producing EphB2/CTF2. Polyubiquitinated; ligand binding stimulates ubiquitination. Ubiquitinated by RNF186 at Lys-891, mainly through 'Lys-27'-linked polyubiquitin chains. Ubiquitinated by CRL2(KLHDC2) E3 ligase complex. In terms of tissue distribution, expressed in the epithelial dark cells of the inner ear. Expressed in the region of the proximal tubules of the kidney nephron. Expressed in myogenic progenitor cells.

It localises to the cell membrane. It is found in the cell projection. Its subcellular location is the axon. The protein resides in the dendrite. It carries out the reaction L-tyrosyl-[protein] + ATP = O-phospho-L-tyrosyl-[protein] + ADP + H(+). Functionally, receptor tyrosine kinase which binds promiscuously transmembrane ephrin-B family ligands residing on adjacent cells, leading to contact-dependent bidirectional signaling into neighboring cells. The signaling pathway downstream of the receptor is referred to as forward signaling while the signaling pathway downstream of the ephrin ligand is referred to as reverse signaling. Functions in axon guidance during development. Involved in the guidance of commissural axons, that form a major interhemispheric connection between the 2 temporal lobes of the cerebral cortex. Also involved in guidance of contralateral inner ear efferent growth cones at the midline and of retinal ganglion cell axons to the optic disk. In addition to axon guidance, also regulates dendritic spines development and maturation and stimulates the formation of excitatory synapses. Upon activation by EFNB1, abolishes the ARHGEF15-mediated negative regulation on excitatory synapse formation. Controls other aspects of development including angiogenesis, palate development and in inner ear development through regulation of endolymph production. Forward and reverse signaling through the EFNB2/EPHB2 complex regulate movement and adhesion of cells that tubularize the urethra and septate the cloaca. May function as a tumor suppressor. May be involved in the regulation of platelet activation and blood coagulation. The polypeptide is Ephrin type-B receptor 2 (Mus musculus (Mouse)).